The following is a 248-amino-acid chain: 21S rRNA pseudouridine(2819) synthase (248 aa).

D58 is an active-site residue.

This sequence belongs to the pseudouridine synthase RluA family.

The protein localises to the mitochondrion. The enzyme catalyses uridine(2819) in 21S rRNA = pseudouridine(2819) in 21S rRNA. Pseudouridylate synthase responsible for the pseudouridine-2819 formation in mitochondrial 21S rRNA. May modulate the efficiency or the fidelity of the mitochondrial translation machinery. The protein is 21S rRNA pseudouridine(2819) synthase (PUS5) of Candida albicans (strain SC5314 / ATCC MYA-2876) (Yeast).